The sequence spans 290 residues: ATP synthase gamma chain (290 aa).

It belongs to the ATPase gamma chain family. F-type ATPases have 2 components, CF(1) - the catalytic core - and CF(0) - the membrane proton channel. CF(1) has five subunits: alpha(3), beta(3), gamma(1), delta(1), epsilon(1). CF(0) has three main subunits: a, b and c.

It is found in the cell inner membrane. Functionally, produces ATP from ADP in the presence of a proton gradient across the membrane. The gamma chain is believed to be important in regulating ATPase activity and the flow of protons through the CF(0) complex. This chain is ATP synthase gamma chain, found in Dinoroseobacter shibae (strain DSM 16493 / NCIMB 14021 / DFL 12).